We begin with the raw amino-acid sequence, 191 residues long: UPF0312 protein Shewmr4_1178 (191 aa).

A signal peptide spans 1 to 22; the sequence is MKKQLLAALIGGSLLAPMAASA.

The protein belongs to the UPF0312 family. Type 1 subfamily.

It is found in the periplasm. The chain is UPF0312 protein Shewmr4_1178 from Shewanella sp. (strain MR-4).